We begin with the raw amino-acid sequence, 122 residues long: MKLLTSLVFCSLLLGVCHGGFFSFIGEAFQGAGDMWRAYTDMKEAGWKDGDKYFHARGNYDAAQRGPGGVWAAEKISDARESFQEFFGRGHEDTMADQEANRHGRSGKDPNYYRPPGLPAKY.

An N-terminal signal peptide occupies residues 1 to 19 (MKLLTSLVFCSLLLGVCHG). Residues 89–108 (RGHEDTMADQEANRHGRSGK) are compositionally biased toward basic and acidic residues. A disordered region spans residues 89-122 (RGHEDTMADQEANRHGRSGKDPNYYRPPGLPAKY).

Belongs to the SAA family. As to quaternary structure, apolipoprotein of the HDL complex. As to expression, expressed by the liver; secreted in plasma.

The protein localises to the secreted. Major acute phase reactant. This chain is Serum amyloid A-2 protein, found in Mus musculus (Mouse).